The primary structure comprises 301 residues: Peroxisome assembly protein 26 (301 aa).

Topologically, residues 1 to 246 (MKNDSSTSAA…DAAASHLLSQ (246 aa)) are cytoplasmic. Residues 247 to 263 (PFKKSLLAALILCLLVL) form a helical; Signal-anchor for type II membrane protein membrane-spanning segment. Topologically, residues 264 to 301 (RFDPATPSSLPFLYQLAHLFRRIQKATLSRLYPLALRD) are peroxisomal.

Belongs to the peroxin-26 family. Interacts directly with PEX6 via its cytoplasmic domain. Interacts indirectly with PEX1, via its interaction with PEX6.

It localises to the peroxisome membrane. In terms of biological role, peroxisomal docking factor that anchors PEX1 and PEX6 to peroxisome membranes. It is therefore required for the formation of the PEX1-PEX6 AAA ATPase complex, a complex that mediates the extraction of the PEX5 receptor from peroxisomal membrane. This chain is Peroxisome assembly protein 26 (Pex26), found in Cricetulus griseus (Chinese hamster).